The chain runs to 92 residues: Small ribosomal subunit protein uS19c (92 aa).

It belongs to the universal ribosomal protein uS19 family.

Its subcellular location is the plastid. The protein resides in the chloroplast. In terms of biological role, protein S19 forms a complex with S13 that binds strongly to the 16S ribosomal RNA. This is Small ribosomal subunit protein uS19c from Angiopteris evecta (Mule's foot fern).